Consider the following 178-residue polypeptide: Fatty-acid and retinol-binding protein 1 (178 aa).

A signal peptide spans 1-16 (MYHRLILLALVGTTMA). 2 coiled-coil regions span residues 67-89 (DAALEALKDKSDKLYKNAVELRN) and 130-153 (KQAARDIIAKYQALSEETKEELKV).

This sequence belongs to the fatty-acid and retinol-binding protein (FARBP) family. Not glycosylated.

Its subcellular location is the secreted. Its function is as follows. Binds retinol. Also binds the fluorescent fatty acid 11-((5-dimethylaminonaphthalene-1-sulfonyl)amino)undecanoic acid (DAUDA). The long chain fatty acid oleic acid can act competitively to displace bound DAUDA and retinol. This Brugia malayi (Filarial nematode worm) protein is Fatty-acid and retinol-binding protein 1.